The following is a 3672-amino-acid chain: Laminin-like protein epi-1 (3672 aa).

The first 27 residues, 1 to 27, serve as a signal peptide directing secretion; that stretch reads MSPYDSSPWATKALFLIVTLLAQFTYS. One can recognise a Laminin N-terminal domain in the interval 28 to 297; that stretch reads QVLTPSQITI…AIKEIMIGGR (270 aa). 3 N-linked (GlcNAc...) asparagine glycosylation sites follow: Asn-121, Asn-140, and Asn-249. Cystine bridges form between Cys-298–Cys-307, Cys-300–Cys-320, Cys-322–Cys-331, Cys-334–Cys-354, Cys-357–Cys-366, Cys-359–Cys-391, Cys-394–Cys-403, Cys-406–Cys-424, Cys-427–Cys-438, Cys-429–Cys-445, Cys-447–Cys-456, Cys-459–Cys-469, Cys-472–Cys-484, Cys-474–Cys-491, Cys-493–Cys-502, Cys-505–Cys-516, Cys-519–Cys-531, Cys-521–Cys-538, Cys-540–Cys-549, Cys-552–Cys-561, Cys-564–Cys-576, Cys-566–Cys-583, Cys-585–Cys-594, Cys-597–Cys-607, Cys-610–Cys-622, Cys-612–Cys-629, Cys-631–Cys-640, Cys-643–Cys-653, Cys-656–Cys-668, Cys-658–Cys-674, Cys-676–Cys-685, Cys-688–Cys-698, Cys-701–Cys-715, Cys-703–Cys-724, Cys-726–Cys-735, Cys-738–Cys-753, Cys-756–Cys-770, Cys-758–Cys-777, Cys-779–Cys-788, Cys-791–Cys-806, Cys-809–Cys-821, Cys-811–Cys-828, and Cys-830–Cys-839. 10 Laminin EGF-like domains span residues 298–356, 357–426, 427–471, 472–518, 519–563, 564–609, 610–655, 656–700, 701–755, and 756–808; these read CVCN…TCEA, CNCF…PCKV, CDCD…KCKP, CECN…GCVE, CVCD…DCKF, CNCD…NCKA, CACD…DCRG, CECL…ICEE, CNCN…GCRS, and CDCN…GCES. Asn-351 carries an N-linked (GlcNAc...) asparagine glycan. Asn-477 carries an N-linked (GlcNAc...) asparagine glycan. N-linked (GlcNAc...) asparagine glycans are attached at residues Asn-511 and Asn-530. An N-linked (GlcNAc...) asparagine glycan is attached at Asn-634. An N-linked (GlcNAc...) asparagine glycan is attached at Asn-761. Residues 809 to 839 form the Laminin EGF-like 11; truncated domain; it reads CHCDIGGALRAECDITSGQCKCRPRVTGLRC. Residues Asn-1014 and Asn-1341 are each glycosylated (N-linked (GlcNAc...) asparagine). 16 disulfides stabilise this stretch: Cys-1415–Cys-1427, Cys-1417–Cys-1434, Cys-1436–Cys-1445, Cys-1448–Cys-1458, Cys-1461–Cys-1469, Cys-1463–Cys-1476, Cys-1478–Cys-1487, Cys-1490–Cys-1503, Cys-1506–Cys-1520, Cys-1508–Cys-1527, Cys-1529–Cys-1538, Cys-1541–Cys-1551, Cys-1554–Cys-1566, Cys-1556–Cys-1573, Cys-1575–Cys-1584, and Cys-1587–Cys-1602. Laminin EGF-like domains lie at 1415-1460, 1461-1505, 1506-1553, and 1554-1604; these read CDCV…ECIK, CQCN…GCQK, CGCH…HCYG, and CSCN…GCVN. The Laminin EGF-like 16; first part domain occupies 1605–1614; that stretch reads CFCFGVTDSC. Residues 1615–1796 enclose the Laminin IV type A domain; it reads RSSMYPVTIM…SVIKASSVEQ (182 aa). Residues Asn-1705 and Asn-1756 are each glycosylated (N-linked (GlcNAc...) asparagine). Residues 1797–1829 form the Laminin EGF-like 16; second part domain; sequence CQCPAPYTGPSCQLCASGYHRVQSGSFLGACVP. 24 cysteine pairs are disulfide-bonded: Cys-1830-Cys-1839, Cys-1832-Cys-1846, Cys-1849-Cys-1858, Cys-1861-Cys-1877, Cys-1880-Cys-1894, Cys-1882-Cys-1905, Cys-1907-Cys-1916, Cys-1919-Cys-1934, Cys-1937-Cys-1951, Cys-1939-Cys-1958, Cys-1961-Cys-1970, Cys-1973-Cys-1987, Cys-1990-Cys-2000, Cys-1992-Cys-2007, Cys-2009-Cys-2018, Cys-2021-Cys-2031, Cys-2037-Cys-2048, Cys-2039-Cys-2055, Cys-2057-Cys-2066, Cys-2069-Cys-2081, Cys-2084-Cys-2096, Cys-2086-Cys-2103, Cys-2105-Cys-2114, and Cys-2117-Cys-2129. Laminin EGF-like domains are found at residues 1830–1879, 1880–1936, 1937–1989, 1990–2036, 2037–2083, and 2084–2131; these read CECN…DCMA, CACP…SCSP, CQCN…NCSS, CECS…GCQG, CHCG…GCDK, and CDCE…GCRR. The N-linked (GlcNAc...) asparagine glycan is linked to Asn-1868. Asn-1944 carries an N-linked (GlcNAc...) asparagine glycan. Asn-1986 carries N-linked (GlcNAc...) asparagine glycosylation. Asn-2002 carries N-linked (GlcNAc...) asparagine glycosylation. 8 N-linked (GlcNAc...) asparagine glycosylation sites follow: Asn-2159, Asn-2207, Asn-2231, Asn-2235, Asn-2401, Asn-2421, Asn-2487, and Asn-2821. Laminin G-like domains are found at residues 2693 to 2884, 2896 to 3066, and 3072 to 3235; these read GAHF…VNGA, ELVV…RSGC, and RTVS…LNGC. Cys-3040 and Cys-3066 are disulfide-bonded. The N-linked (GlcNAc...) asparagine glycan is linked to Asn-3087. The cysteines at positions 3209 and 3235 are disulfide-linked. A disordered region spans residues 3236-3294; the sequence is SLSDDENISTTTTAAPKPTDDSDVAVLPIDEEEESTTTTTTTTTEEPTEEPAEARPDGH. Asn-3242 carries an N-linked (GlcNAc...) asparagine glycan. Low complexity predominate over residues 3271–3280; the sequence is TTTTTTTTTE. Laminin G-like domains are found at residues 3310–3482 and 3488–3669; these read GFNF…TEQC and PGMY…RNAC. A disulfide bond links Cys-3460 and Cys-3482. An N-linked (GlcNAc...) asparagine glycan is attached at Asn-3541. Cys-3633 and Cys-3669 are joined by a disulfide.

Laminin is a complex glycoprotein, consisting of three different polypeptide chains (alpha, beta, gamma), which are bound to each other by disulfide bonds into a cross-shaped molecule comprising one long and three short arms with globules at each end.

The protein resides in the secreted. The protein localises to the extracellular space. It is found in the extracellular matrix. Its subcellular location is the basement membrane. Its function is as follows. Binding to cells via a high affinity receptor, laminin is thought to mediate the attachment, migration and organization of cells into tissues during embryonic development by interacting with other extracellular matrix components. Required to assemble a stable basement membrane and for organizing receptor complexes and cytoskeletal components to the proper cell surfaces. During embryogenesis, does not require the presence of collagen type IV in order to associate with cell surfaces, prior to assembly of the prototypical basement membrane. During the formation of neuromuscular junctions at the larval stage, negatively regulates membrane protrusion from body wall muscles, probably downstream of the integrin complex formed by pat-2 and pat-3. Probably plays a distinct role from the related laminin subunit alpha lam-3. This chain is Laminin-like protein epi-1 (epi-1), found in Caenorhabditis elegans.